Reading from the N-terminus, the 213-residue chain is N-(5'-phosphoribosyl)anthranilate isomerase (213 aa).

Belongs to the TrpF family.

It catalyses the reaction N-(5-phospho-beta-D-ribosyl)anthranilate = 1-(2-carboxyphenylamino)-1-deoxy-D-ribulose 5-phosphate. The protein operates within amino-acid biosynthesis; L-tryptophan biosynthesis; L-tryptophan from chorismate: step 3/5. The protein is N-(5'-phosphoribosyl)anthranilate isomerase of Rhodopseudomonas palustris (strain ATCC BAA-98 / CGA009).